The chain runs to 261 residues: Glutamate racemase (261 aa).

Residues 12 to 13 (DS) and 44 to 45 (YG) each bind substrate. The active-site Proton donor/acceptor is the Cys-76. 77–78 (NT) serves as a coordination point for substrate. Cys-180 serves as the catalytic Proton donor/acceptor. 181 to 182 (TH) lines the substrate pocket.

Belongs to the aspartate/glutamate racemases family.

It catalyses the reaction L-glutamate = D-glutamate. It functions in the pathway cell wall biogenesis; peptidoglycan biosynthesis. Its function is as follows. Provides the (R)-glutamate required for cell wall biosynthesis. The protein is Glutamate racemase of Borreliella burgdorferi (strain ATCC 35210 / DSM 4680 / CIP 102532 / B31) (Borrelia burgdorferi).